Here is a 398-residue protein sequence, read N- to C-terminus: Lymphocyte transmembrane adapter 1 (398 aa).

Over 1 to 37 (MDGVTPTLSTIRGRTLESSTLHVTPRSLDRNKDQITN) the chain is Extracellular. The chain crosses the membrane as a helical; Signal-anchor for type III membrane protein span at residues 38–58 (IFSGFAGLLAILLVVAVFCIL). Residues 59–398 (WNWNKRKKRQ…GPGTQLLPDE (340 aa)) are Cytoplasmic-facing. Residue tyrosine 193 is modified to Phosphotyrosine. Residues 228-261 (TEERDEGCGDAGDCTSLYSPGAEDSDSLSNGEGS) form a disordered region. Tyrosine 268 and tyrosine 294 each carry phosphotyrosine. The segment at 298 to 330 (PAADPSGSQQQAEKDVPSSNIGHVEDKTDDPGT) is disordered. The span at 303-318 (SGSQQQAEKDVPSSNI) shows a compositional bias: polar residues. Over residues 320 to 329 (HVEDKTDDPG) the composition is skewed to basic and acidic residues. A phosphotyrosine mark is found at tyrosine 345 and tyrosine 373. The disordered stretch occupies residues 347-398 (DFQPFTQSEDSQMKHREEMSNEDSSDYENVLTAKLGGRDSEQGPGTQLLPDE).

When phosphorylated, interacts with GRB2, PIK3R1 and GRAP2. Post-translationally, phosphorylated on tyrosines by Syk, Lck or ZAP70 upon TCR or BCR activation; which leads to the recruitment of GRB2, PIK3R1 and GRAP2. As to expression, expressed in spleen, thymus, and peripheral blood leukocytes. Expressed in several B-, T-, NK and monocyte cell lines.

The protein localises to the cell membrane. Negatively regulates TCR (T-cell antigen receptor)-mediated signaling in T-cells and BCR (B-cell antigen receptor)-mediated signaling in B-cells. The protein is Lymphocyte transmembrane adapter 1 (LAX1) of Homo sapiens (Human).